The primary structure comprises 100 residues: Sodium-influx-stimulating peptide (100 aa).

An N-terminal signal peptide occupies residues 1-23; the sequence is MLSSVALRYLLVLSLAFLAVVTS.

Three disulfide bonds are present. In terms of tissue distribution, expressed by the yellow cells, peptidergic (neuroendocrine) neurons of the central nervous system.

Functionally, stimulates integumental Na(+) uptake. Controls the activity of sodium pumps in the integument, pericardium, ureter and nephridial gland. The polypeptide is Sodium-influx-stimulating peptide (SIS) (Lymnaea stagnalis (Great pond snail)).